We begin with the raw amino-acid sequence, 554 residues long: Germacrene A synthase (554 aa).

Residues Asp306, Asp310, Thr453, and Glu457 each contribute to the Mg(2+) site. The short motif at 306-310 (DDTYD) is the DDXXD motif element.

The protein belongs to the terpene synthase family. The cofactor is Mg(2+).

The protein resides in the cytoplasm. The protein localises to the cytosol. The catalysed reaction is (2E,6E)-farnesyl diphosphate = (+)-(R)-germacrene A + diphosphate. Its pathway is secondary metabolite biosynthesis; terpenoid biosynthesis. Sesquiterpene synthase involved in germacrene A biosynthesis. Also produces additional sesquiterpene products, including 4,5-di-epi-aristolochene, eremophilene, alpha-selinene. In Pogostemon cablin (Patchouli), this protein is Germacrene A synthase.